Here is a 564-residue protein sequence, read N- to C-terminus: Kelch repeat and BTB domain-containing protein 1 (564 aa).

Positions 21-88 (CDINIVINDE…IYGIPLSLTN (68 aa)) constitute a BTB domain. Kelch repeat units lie at residues 252–297 (IELI…VLDN), 298–346 (IIYM…ADDE), 347–395 (YIYC…MLNG), 397–441 (IYVI…VHDG), 442–492 (KIYI…SAHN), and 494–539 (LYVG…CEPI).

The protein belongs to the poxviruses Kelch family. As to quaternary structure, interacts (via BTB domain) with host CUL3.

Its subcellular location is the host cytoplasm. Functionally, probable substrate-specific adapter of CUL3-containing E3 ubiquitin-protein ligases which mediate the ubiquitination and subsequent proteasomal degradation of host target proteins. In Homo sapiens (Human), this protein is Kelch repeat and BTB domain-containing protein 1 (KBTB1).